We begin with the raw amino-acid sequence, 360 residues long: Photosystem II protein D1 2 (360 aa).

Residues 1 to 31 (MTTTLQQRESASLWEQFCQWVTSTNNRIYVG) lie on the Cytoplasmic side of the membrane. The helical transmembrane segment at 32–53 (WFGTLMIPTLLTATTCFIIAFI) threads the bilayer. Over 54–110 (AAPPVDIDGIREPVAGSLLYGNNIISGAVVPSSNAIGLHFYPIWEAASLDEWLYNGG) the chain is Lumenal, thylakoid. The helical transmembrane segment at 111-134 (PYQLVVFHFLIGIFCYMGRQWELS) threads the bilayer. His118 contacts chlorophyll a. Tyr126 contributes to the pheophytin a binding site. Residues 135–142 (YRLGMRPW) are Cytoplasmic-facing. A helical transmembrane segment spans residues 143-161 (ICVAYSAPVSAATAVFLIY). Position 147 (Tyr147) interacts with pheophytin a. The Lumenal, thylakoid portion of the chain corresponds to 162 to 191 (PIGQGSFSDGMPLGISGTFNFMIVFQAEHN). Residues Asp170 and Glu189 each contribute to the [CaMn4O5] cluster site. The chain crosses the membrane as a helical span at residues 192–218 (ILMHPFHMLGVAGVFGGSLFSAMHGSL). His198 contributes to the chlorophyll a binding site. The a quinone site is built by His215, Ser264, and Phe265. His215 provides a ligand contact to Fe cation. Residues 219–270 (VTSSLVRETTEVESQNYGYKFGQEEETYNIVAAHGYFGRLIFQYASFNNSRS) lie on the Cytoplasmic side of the membrane. A helical membrane pass occupies residues 271 to 295 (LHFFLGAWPVIGIWFTAMGVSTMAF). His272 serves as a coordination point for Fe cation. Over 296–360 (NLNGFNFNQS…VALTAPAVNG (65 aa)) the chain is Lumenal, thylakoid. Residues His332, Glu333, His337, Asp342, and Ala344 each contribute to the [CaMn4O5] cluster site. The propeptide occupies 345–360 (SGEQAPVALTAPAVNG).

This sequence belongs to the reaction center PufL/M/PsbA/D family. PSII is composed of 1 copy each of membrane proteins PsbA, PsbB, PsbC, PsbD, PsbE, PsbF, PsbH, PsbI, PsbJ, PsbK, PsbL, PsbM, PsbT, PsbX, PsbY, PsbZ, Psb30/Ycf12, peripheral proteins PsbO, CyanoQ (PsbQ), PsbU, PsbV and a large number of cofactors. It forms dimeric complexes. The cofactor is The D1/D2 heterodimer binds P680, chlorophylls that are the primary electron donor of PSII, and subsequent electron acceptors. It shares a non-heme iron and each subunit binds pheophytin, quinone, additional chlorophylls, carotenoids and lipids. D1 provides most of the ligands for the Mn4-Ca-O5 cluster of the oxygen-evolving complex (OEC). There is also a Cl(-1) ion associated with D1 and D2, which is required for oxygen evolution. The PSII complex binds additional chlorophylls, carotenoids and specific lipids.. Post-translationally, C-terminally processed by CtpA; processing is essential to allow assembly of the oxygen-evolving complex and photosynthetic growth. Tyr-161 forms a radical intermediate that is referred to as redox-active TyrZ, YZ or Y-Z.

The protein resides in the cellular thylakoid membrane. It carries out the reaction 2 a plastoquinone + 4 hnu + 2 H2O = 2 a plastoquinol + O2. Functionally, photosystem II (PSII) is a light-driven water:plastoquinone oxidoreductase that uses light energy to abstract electrons from H(2)O, generating O(2) and a proton gradient subsequently used for ATP formation. It consists of a core antenna complex that captures photons, and an electron transfer chain that converts photonic excitation into a charge separation. The D1/D2 (PsbA/PsbD) reaction center heterodimer binds P680, the primary electron donor of PSII as well as several subsequent electron acceptors. This is Photosystem II protein D1 2 from Synechocystis sp. (strain ATCC 27184 / PCC 6803 / Kazusa).